A 447-amino-acid polypeptide reads, in one-letter code: Serine/threonine-protein phosphatase 2A 55 kDa regulatory subunit B gamma isoform (447 aa).

WD repeat units lie at residues 22–61 (TEAD…KNAP), 87–128 (EIEE…KRPE), 171–209 (GHTY…RSFN), 220–260 (DLTE…LCDK), 279–317 (EIIS…RPIE), 334–375 (ESDC…DVTL), and 410–446 (DFTK…NSDM).

The protein belongs to the phosphatase 2A regulatory subunit B family. In terms of assembly, PP2A consists of a common heterodimeric core enzyme, composed of a 36 kDa catalytic subunit (subunit C) and a 65 kDa constant regulatory subunit (PR65 or subunit A), that associates with a variety of regulatory subunits. Proteins that associate with the core dimer include three families of regulatory subunits B (the R2/B/PR55/B55, R3/B''/PR72/PR130/PR59 and R5/B'/B56 families), the 48 kDa variable regulatory subunit, viral proteins, and cell signaling molecules. Interacts with IER5. As to expression, highly expressed in brain.

The B regulatory subunit might modulate substrate selectivity and catalytic activity, and might also direct the localization of the catalytic enzyme to a particular subcellular compartment. In Rattus norvegicus (Rat), this protein is Serine/threonine-protein phosphatase 2A 55 kDa regulatory subunit B gamma isoform (Ppp2r2c).